The chain runs to 110 residues: Small ubiquitin-related modifier 3 (110 aa).

Glycyl lysine isopeptide (Lys-Gly) (interchain with G-Cter in SUMO2) cross-links involve residues Lys-5 and Lys-7. A Glycyl lysine isopeptide (Lys-Gly) (interchain with G-Cter in SUMO); alternate cross-link involves residue Lys-11. Lys-11 participates in a covalent cross-link: Glycyl lysine isopeptide (Lys-Gly) (interchain with G-Cter in SUMO2); alternate. The 78-residue stretch at Asp-15–Gly-92 folds into the Ubiquitin-like domain. Polar residues predominate over residues Gln-89–Thr-101. The segment at Gln-89–Tyr-110 is disordered. Residue Gly-92 forms a Glycyl lysine isopeptide (Gly-Lys) (interchain with K-? in acceptor proteins) linkage. A propeptide spanning residues Thr-93–Tyr-110 is cleaved from the precursor.

It belongs to the ubiquitin family. SUMO subfamily. In terms of assembly, interacts with SAE2 and UBE2I. Covalently attached to a number of proteins. Interacts with USP25 (via ts SIM domain); the interaction sumoylates USP25 and inhibits its ubiquitin hydrolyzing activity. Interacts with BMAL1. Post-translationally, polymeric chains can be formed through Lys-11 cross-linking. Cleavage of precursor form by SENP1, SENP2 or SENP5 is necessary for function.

Its subcellular location is the cytoplasm. It localises to the nucleus. It is found in the PML body. Its function is as follows. Ubiquitin-like protein which can be covalently attached to target lysines either as a monomer or as a lysine-linked polymer. Does not seem to be involved in protein degradation and may function as an antagonist of ubiquitin in the degradation process. Plays a role in a number of cellular processes such as nuclear transport, DNA replication and repair, mitosis and signal transduction. Covalent attachment to its substrates requires prior activation by the E1 complex SAE1-SAE2 and linkage to the E2 enzyme UBE2I, and can be promoted by an E3 ligase such as PIAS1-4, RANBP2 or CBX4. Plays a role in the regulation of sumoylation status of SETX. This is Small ubiquitin-related modifier 3 (Sumo3) from Rattus norvegicus (Rat).